A 483-amino-acid chain; its full sequence is RNA-binding protein Nova-1 (483 aa).

The segment at 1–44 (MMAAAPIQQNGTHTGVPIDLDPPDSRKRPLEAPPEAGSTKRTNT) is disordered. The Bipartite nuclear localization signal signature appears at 27–43 (KRPLEAPPEAGSTKRTN). 3 KH domains span residues 49 to 116 (QYFL…HGFI), 147 to 213 (IKQV…VELI), and 397 to 464 (KDVV…QYLI). The segment at 395–479 (GSKDVVEIAV…YEQGVRAANP (85 aa)) is required for RNA binding.

As to quaternary structure, interacts with PTBP2; the interaction is direct.

The protein resides in the nucleus. Its function is as follows. Functions to regulate alternative splicing in neurons by binding pre-mRNA in a sequence-specific manner to activate exon inclusion or exclusion. It binds specifically to the sequences 5'-YCAY-3' and regulates splicing in only a subset of regulated exons. Binding to an exonic 5'-YCAY-3' cluster changes the protein complexes assembled on pre-mRNA, blocking U1 snRNP binding and exon inclusion, whereas binding to an intronic 5'-YCAY-3' cluster enhances spliceosome assembly and exon inclusion. Binding to 5'-YCAY-3' clusters results in a local and asymmetric action to regulate spliceosome assembly and alternative splicing in neurons. Binding to an exonic 5'-YCAY-3' cluster changed the protein complexes assembled on pre-mRNA, blocking U1 snRNP (small nuclear ribonucleoprotein) binding and exon inclusion, whereas binding to an intronic 5'-YCAY-3' cluster enhanced spliceosome assembly and exon inclusion. With NOVA1, they perform unique biological functions in different brain areas and cell types. Autoregulates its own expression by acting as a splicing repressor. Acts to activate the inclusion of exon E3A in the glycine receptor alpha-2 chain and of exon E9 in gamma-aminobutyric-acid receptor gamma-2 subunit via a distal downstream UCAU-rich intronic splicing enhancer. Acts to regulate a novel glycine receptor alpha-2 chain splice variant (alpha-2N) in developing spinal cord. The protein is RNA-binding protein Nova-1 (NOVA1) of Macaca fascicularis (Crab-eating macaque).